The chain runs to 272 residues: Putative pyruvate, phosphate dikinase regulatory protein (272 aa).

An ADP-binding site is contributed by Gly153 to Thr160.

This sequence belongs to the pyruvate, phosphate/water dikinase regulatory protein family. PDRP subfamily.

It catalyses the reaction N(tele)-phospho-L-histidyl/L-threonyl-[pyruvate, phosphate dikinase] + ADP = N(tele)-phospho-L-histidyl/O-phospho-L-threonyl-[pyruvate, phosphate dikinase] + AMP + H(+). The enzyme catalyses N(tele)-phospho-L-histidyl/O-phospho-L-threonyl-[pyruvate, phosphate dikinase] + phosphate + H(+) = N(tele)-phospho-L-histidyl/L-threonyl-[pyruvate, phosphate dikinase] + diphosphate. Functionally, bifunctional serine/threonine kinase and phosphorylase involved in the regulation of the pyruvate, phosphate dikinase (PPDK) by catalyzing its phosphorylation/dephosphorylation. The protein is Putative pyruvate, phosphate dikinase regulatory protein of Chelativorans sp. (strain BNC1).